We begin with the raw amino-acid sequence, 380 residues long: Kappa-type opioid receptor (380 aa).

Residues 1–57 (MESPIQIFRGEPGPTCAPSACLLPNSSSWFPNWAESDSNGSVGSEDQQLEPAHISPA) are Extracellular-facing. Asn25 and Asn39 each carry an N-linked (GlcNAc...) asparagine glycan. Residues 58–85 (IPVIITAVYSVVFVVGLVGNSLVMFVII) form a helical membrane-spanning segment. Residues 86 to 95 (RYTKMKTATN) are Cytoplasmic-facing. Residues 96 to 119 (IYIFNLALADALVTTTMPFQSAVY) form a helical membrane-spanning segment. Over 120–132 (LMNSWPFGDVLCK) the chain is Extracellular. Cys131 and Cys210 are disulfide-bonded. A helical transmembrane segment spans residues 133-154 (IVISIDYYNMFTSIFTLTMMSV). The Cytoplasmic segment spans residues 155–173 (DRYIAVCHPVKALDFRTPL). The chain crosses the membrane as a helical span at residues 174-196 (KAKIINICIWLLASSVGISAIVL). At 197–222 (GGTKVREDVDVIECSLQFPDDEYSWW) the chain is on the extracellular side. Residues 223 to 247 (DLFMKICVFVFAFVIPVLIIIVCYT) form a helical membrane-spanning segment. At 248–274 (LMILRLKSVRLLSGSREKDRNLRRITK) the chain is on the cytoplasmic side. A helical membrane pass occupies residues 275-296 (LVLVVVAVFIICWTPIHIFILV). Topologically, residues 297–311 (EALGSTSHSTAVLSS) are extracellular. A helical transmembrane segment spans residues 312–333 (YYFCIALGYTNSSLNPVLYAFL). Residues 334–380 (DENFKRCFRDFCFPIKMRMERQSTNRVRNTVQDPASMRDVGGMNKPV) are Cytoplasmic-facing. Cys345 carries the S-palmitoyl cysteine lipid modification.

Belongs to the G-protein coupled receptor 1 family. In terms of assembly, interacts with NHERF1. Interacts with GABARAPL1.

The protein resides in the cell membrane. Functionally, G-protein coupled opioid receptor that functions as a receptor for endogenous alpha-neoendorphins and dynorphins, but has low affinity for beta-endorphins. Also functions as a receptor for various synthetic opioids and for the psychoactive diterpene salvinorin A. Ligand binding causes a conformation change that triggers signaling via guanine nucleotide-binding proteins (G proteins) and modulates the activity of down-stream effectors, such as adenylate cyclase. Signaling leads to the inhibition of adenylate cyclase activity. Inhibits neurotransmitter release by reducing calcium ion currents and increasing potassium ion conductance. Plays a role in the perception of pain. Plays a role in mediating reduced physical activity upon treatment with synthetic opioids. Plays a role in the regulation of salivation in response to synthetic opioids. May play a role in arousal and regulation of autonomic and neuroendocrine functions. This chain is Kappa-type opioid receptor (Oprk1), found in Rattus norvegicus (Rat).